The sequence spans 353 residues: DNA integrity scanning protein DisA (353 aa).

In terms of domain architecture, DAC spans 6–144 (DKELMNILKI…GGIKYVLRDS (139 aa)). Residues Gly-73, Leu-91, and 104–108 (TRHRT) contribute to the ATP site.

Belongs to the DisA family. As to quaternary structure, homooctamer. The cofactor is Mg(2+).

It catalyses the reaction 2 ATP = 3',3'-c-di-AMP + 2 diphosphate. Functionally, participates in a DNA-damage check-point that is active prior to asymmetric division when DNA is damaged. DisA forms globular foci that rapidly scan along the chromosomes during sporulation, searching for lesions. When a lesion is present, DisA pauses at the lesion site. This triggers a cellular response that culminates in a temporary block in sporulation initiation. In terms of biological role, also has diadenylate cyclase activity, catalyzing the condensation of 2 ATP molecules into cyclic di-AMP (c-di-AMP). c-di-AMP acts as a signaling molecule that couples DNA integrity with progression of sporulation. The rise in c-di-AMP level generated by DisA while scanning the chromosome, operates as a positive signal that advances sporulation; upon encountering a lesion, the DisA focus arrests at the damaged site and halts c-di-AMP synthesis. This Clostridium botulinum (strain 657 / Type Ba4) protein is DNA integrity scanning protein DisA.